The primary structure comprises 628 residues: Nuclear RNA export factor 1 (628 aa).

Residues 47 to 83 are disordered; the sequence is DTQSRYEDDDEPAVPVRASLTSASSRGRGGSSRGFGQ. The segment covering 63–72 has biased composition (low complexity); the sequence is RASLTSASSR. The RRM domain maps to 100 to 179; that stretch reads YKCRATGAAK…EFYTSKVPAP (80 aa). LRR repeat units lie at residues 245–270 and 271–294; these read NIVALSLSNNRIRHLDYASALVSIAK and FVMELDLSHNHISTEKELEKFAGL. Residues 365-526 form the NTF2 domain; that stretch reads LVEQFVTSYF…VAVISDQLFI (162 aa). The region spanning 576–628 is the TAP-C domain; that stretch reads PIREEMIKAMCQFSGMIPPFSEKCLADCAWNFDFACQKFNEIKSSVPAEAFAH.

This sequence belongs to the NXF family. In terms of assembly, interacts with nucleoporins, Nup98, Nup153 and Nup214.

The protein localises to the nucleus. Its function is as follows. Involved in RNA export from the nucleus to the cytoplasm. The polypeptide is Nuclear RNA export factor 1 (nxf-1) (Caenorhabditis elegans).